The primary structure comprises 114 residues: INGDAKGTVFFEQETSEAPVKVTGEVLGLTKGLHGFHVHEFGNNTNGCMSSGPHFNPGNKEHGAPTDGNRHLGDLGNIQAAGDSPTAVSITDSKITLFGANSIIGRTVVVHADA.

Residues His37, His39, and His54 each coordinate Cu cation. His54, His62, His71, and Asp74 together coordinate Zn(2+). A disordered region spans residues 54 to 80 (HFNPGNKEHGAPTDGNRHLGDLGNIQA). Residues 59–73 (NKEHGAPTDGNRHLG) are compositionally biased toward basic and acidic residues. His111 contacts Cu cation.

It belongs to the Cu-Zn superoxide dismutase family. As to quaternary structure, homodimer. Cu cation serves as cofactor. The cofactor is Zn(2+).

The protein localises to the cytoplasm. The catalysed reaction is 2 superoxide + 2 H(+) = H2O2 + O2. Destroys radicals which are normally produced within the cells and which are toxic to biological systems. This Drosophila tolteca (Fruit fly) protein is Superoxide dismutase [Cu-Zn].